The primary structure comprises 172 residues: Adenine phosphoribosyltransferase (172 aa).

Belongs to the purine/pyrimidine phosphoribosyltransferase family. In terms of assembly, homodimer.

The protein resides in the cytoplasm. It catalyses the reaction AMP + diphosphate = 5-phospho-alpha-D-ribose 1-diphosphate + adenine. It functions in the pathway purine metabolism; AMP biosynthesis via salvage pathway; AMP from adenine: step 1/1. Its function is as follows. Catalyzes a salvage reaction resulting in the formation of AMP, that is energically less costly than de novo synthesis. This is Adenine phosphoribosyltransferase from Anaeromyxobacter dehalogenans (strain 2CP-1 / ATCC BAA-258).